The sequence spans 266 residues: Small ribosomal subunit protein uS3 (266 aa).

Positions 39–107 constitute a KH type-2 domain; that stretch reads VREYLKKKLK…PVHVNIEEIR (69 aa). Residues 218–266 are disordered; it reads EVAEDKRPRRNARPGDRRPRRDGEGGAPGARRGAPRRGAGKPEDGKTGE. Basic and acidic residues-rich tracts occupy residues 230 to 241 and 257 to 266; these read RPGDRRPRRDGE and GKPEDGKTGE.

This sequence belongs to the universal ribosomal protein uS3 family. As to quaternary structure, part of the 30S ribosomal subunit. Forms a tight complex with proteins S10 and S14.

Its function is as follows. Binds the lower part of the 30S subunit head. Binds mRNA in the 70S ribosome, positioning it for translation. This Burkholderia multivorans (strain ATCC 17616 / 249) protein is Small ribosomal subunit protein uS3.